Reading from the N-terminus, the 90-residue chain is MKCPSIFLTLLIFVSSCTSILINESSDEQRIYSFSPTTSPFDPRSLNQELKIGRIGYCFDCARACMRRGKYIRTCSFERKLCRCSISDIK.

The N-terminal stretch at M1 to S19 is a signal peptide. N-linked (GlcNAc...) asparagine glycosylation is present at N23. 3 cysteine pairs are disulfide-bonded: C58/C75, C61/C82, and C65/C84. Positions R67–S87 are PRK6 binding.

It belongs to the DEFL family. In terms of assembly, binds to PRK6 LRRs. In terms of tissue distribution, expressed in the pistil. Detected exclusively in the synergid cells.

It is found in the secreted. In terms of biological role, pollen tube attractants guiding pollen tubes to the ovular micropyle. This Arabidopsis thaliana (Mouse-ear cress) protein is Protein LURE 1.4.